We begin with the raw amino-acid sequence, 149 residues long: Arginine repressor (149 aa).

This sequence belongs to the ArgR family.

It is found in the cytoplasm. The protein operates within amino-acid biosynthesis; L-arginine biosynthesis [regulation]. In terms of biological role, regulates arginine biosynthesis genes. The chain is Arginine repressor from Listeria monocytogenes serotype 4b (strain F2365).